Consider the following 122-residue polypeptide: Beta-2-microglobulin (122 aa).

An N-terminal signal peptide occupies residues 1 to 22 (MMARIFILALLGQLCFLPYLDA). Residues 27 to 115 (PKVQVYSRHP…HLTLQEPKVV (89 aa)) enclose the Ig-like C1-type domain. The cysteines at positions 47 and 102 are disulfide-linked.

This sequence belongs to the beta-2-microglobulin family. As to quaternary structure, heterodimer of an alpha chain and a beta chain. Beta-2-microglobulin is the beta-chain of major histocompatibility complex class I molecules.

It is found in the secreted. In terms of biological role, component of the class I major histocompatibility complex (MHC). Involved in the presentation of peptide antigens to the immune system. The sequence is that of Beta-2-microglobulin (B2M) from Trichosurus vulpecula (Brush-tailed possum).